A 195-amino-acid chain; its full sequence is TM2 domain-containing protein C41D11.9 (195 aa).

A signal peptide spans 1-20 (MLHKILFLICLASFIPTIGS). The Extracellular portion of the chain corresponds to 21 to 136 (ISGTKDVKSK…NWSSGYSWTK (116 aa)). Asparagine 55, asparagine 93, and asparagine 127 each carry an N-linked (GlcNAc...) asparagine glycan. A TM2 domain is found at 131–179 (GYSWTKTMILSVVLGGFGADRFYLGLWKSAIGKLFSFGGLGVWTLVDVV). The chain crosses the membrane as a helical span at residues 137-157 (TMILSVVLGGFGADRFYLGLW). The Cytoplasmic segment spans residues 158 to 163 (KSAIGK). The helical transmembrane segment at 164-184 (LFSFGGLGVWTLVDVVLIAVG) threads the bilayer. The Extracellular portion of the chain corresponds to 185 to 195 (YIKPYDGSMYI).

The protein belongs to the TM2 family.

Its subcellular location is the membrane. The polypeptide is TM2 domain-containing protein C41D11.9 (Caenorhabditis elegans).